The following is a 583-amino-acid chain: Poly [ADP-ribose] polymerase 2 (583 aa).

A disordered region spans residues 1–77; sequence MAARRRRSTG…GMPGRSWASK (77 aa). The segment at 1 to 103 is N-terminal region (NTR); the sequence is MAARRRRSTG…VDPECTAKVG (103 aa). 2 short sequence motifs (nuclear localization signal) span residues 21 to 22 and 35 to 40; these read KR and PAKKTR. 2 positions are modified to N6-acetyllysine: Lys-37 and Lys-38. Residues 57 to 67 show a composition bias toward basic and acidic residues; it reads ANKDRTEDKQD. One can recognise a WGR domain in the interval 104–201; it reads KAHVYCEGND…EKFEKVPGKY (98 aa). Phosphoserine is present on residues Ser-226 and Ser-232. A PARP alpha-helical domain is found at 231-348; that stretch reads ESQLDLRVQE…DIEIAIKLVK (118 aa). Residues 356 to 583 enclose the PARP catalytic domain; sequence HPLDQHYRNL…KVQFNFLQLW (228 aa). NAD(+)-binding positions include 428–430, Gly-437, Arg-444, and Ser-470; that span reads HGS. Glu-558 functions as the For poly [ADP-ribose] polymerase activity in the catalytic mechanism.

It belongs to the ARTD/PARP family. As to quaternary structure, component of a base excision repair (BER) complex, containing at least XRCC1, PARP1, POLB and LRIG3. Homo- and heterodimer with PARP1. Interacts (via the PARP catalytic domain) with HPF1. Interacts with core nucleosomes. Auto poly-ADP-ribosylated on serine residues, leading to dissociation of the PARP2-HPF1 complex from chromatin. Poly-ADP-ribosylated by PARP1. In terms of processing, acetylation reduces DNA binding and enzymatic activity. Post-translationally, proteolytically cleaved by caspase-8 (CASP8) in response to apoptosis, leading to its inactivation. In terms of tissue distribution, widely expressed, mainly in actively dividing tissues. The highest levels are in the brain, heart, pancreas, skeletal muscle and testis; also detected in kidney, liver, lung, placenta, ovary and spleen; levels are low in leukocytes, colon, small intestine, prostate and thymus.

Its subcellular location is the nucleus. It localises to the chromosome. The catalysed reaction is NAD(+) + (ADP-D-ribosyl)n-acceptor = nicotinamide + (ADP-D-ribosyl)n+1-acceptor + H(+).. It catalyses the reaction L-seryl-[protein] + NAD(+) = O-(ADP-D-ribosyl)-L-seryl-[protein] + nicotinamide + H(+). It carries out the reaction L-aspartyl-[protein] + NAD(+) = 4-O-(ADP-D-ribosyl)-L-aspartyl-[protein] + nicotinamide. The enzyme catalyses L-glutamyl-[protein] + NAD(+) = 5-O-(ADP-D-ribosyl)-L-glutamyl-[protein] + nicotinamide. ADP-ribosyltransferase activity is regulated via an allosteric activation mechanism. In absence of activation signal, PARP2 is autoinhibited by the PARP alpha-helical domain (also named HD region), which prevents effective NAD(+)-binding. Activity is highly stimulated by signals, which unfold the PARP alpha-helical domain, relieving autoinhibition. Poly-ADP-ribosyltransferase activity is tightly regulated and PARP2 is removed from damaged chromatin following initial poly-ADP-ribosylation of chromatin to avoid prolonged residence (trapping) that has cytotoxic consequences. CHD1L promotes PARP2 removal from chromatin. ADP-ribosyltransferase activity is inhibited by a number of PARP inhibitors (PARPi) compounds, that are used the treatment of breast or ovarian cancers that have defects in DNA repair by homologous recombination. PARPi molecules (niraparib, talazoparib, and, to a lesser extent, olaparib) also trap PARP2 at DNA damage sites. Functionally, poly-ADP-ribosyltransferase that mediates poly-ADP-ribosylation of proteins and plays a key role in DNA repair. Mediates glutamate, aspartate or serine ADP-ribosylation of proteins: the ADP-D-ribosyl group of NAD(+) is transferred to the acceptor carboxyl group of target residues and further ADP-ribosyl groups are transferred to the 2'-position of the terminal adenosine moiety, building up a polymer with an average chain length of 20-30 units. Serine ADP-ribosylation of proteins constitutes the primary form of ADP-ribosylation of proteins in response to DNA damage. Mediates glutamate and aspartate ADP-ribosylation of target proteins in absence of HPF1. Following interaction with HPF1, catalyzes serine ADP-ribosylation of target proteins; HPF1 conferring serine specificity by completing the PARP2 active site. PARP2 initiates the repair of double-strand DNA breaks: recognizes and binds DNA breaks within chromatin and recruits HPF1, licensing serine ADP-ribosylation of target proteins, such as histones, thereby promoting decompaction of chromatin and the recruitment of repair factors leading to the reparation of DNA strand breaks. HPF1 initiates serine ADP-ribosylation but restricts the polymerase activity of PARP2 in order to limit the length of poly-ADP-ribose chains. Specifically mediates formation of branched poly-ADP-ribosylation. Branched poly-ADP-ribose chains are specifically recognized by some factors, such as APLF. In addition to proteins, also able to ADP-ribosylate DNA: preferentially acts on 5'-terminal phosphates at DNA strand breaks termini in nicked duplex. This Homo sapiens (Human) protein is Poly [ADP-ribose] polymerase 2.